The sequence spans 372 residues: Erythronate-4-phosphate dehydrogenase (372 aa).

Residues Ser-45 and Thr-66 each contribute to the substrate site. Asp-146 contributes to the NAD(+) binding site. The active site involves Arg-209. Asp-233 is a binding site for NAD(+). The active site involves Glu-238. Catalysis depends on His-255, which acts as the Proton donor. NAD(+) is bound at residue Gly-258. Residue Tyr-259 participates in substrate binding.

The protein belongs to the D-isomer specific 2-hydroxyacid dehydrogenase family. PdxB subfamily. In terms of assembly, homodimer.

The protein resides in the cytoplasm. The catalysed reaction is 4-phospho-D-erythronate + NAD(+) = (R)-3-hydroxy-2-oxo-4-phosphooxybutanoate + NADH + H(+). Its pathway is cofactor biosynthesis; pyridoxine 5'-phosphate biosynthesis; pyridoxine 5'-phosphate from D-erythrose 4-phosphate: step 2/5. Its function is as follows. Catalyzes the oxidation of erythronate-4-phosphate to 3-hydroxy-2-oxo-4-phosphonooxybutanoate. The sequence is that of Erythronate-4-phosphate dehydrogenase from Blochmanniella floridana.